The following is a 119-amino-acid chain: Beta-2-microglobulin (119 aa).

Residues 1–20 (MARFVVAALLVLLCLSGLEA) form the signal peptide. An Ig-like C1-type domain is found at 25–114 (PKIQVYSRHP…VTFPTPKTVK (90 aa)). A disulfide bond links cysteine 45 and cysteine 100.

It belongs to the beta-2-microglobulin family. Heterodimer of an alpha chain and a beta chain. Beta-2-microglobulin is the beta-chain of major histocompatibility complex class I molecules.

Its subcellular location is the secreted. Component of the class I major histocompatibility complex (MHC). Involved in the presentation of peptide antigens to the immune system. The chain is Beta-2-microglobulin (B2M) from Cebus albifrons (White-fronted capuchin).